Reading from the N-terminus, the 2467-residue chain is Transcription factor TFIIIB component B'' homolog (2467 aa).

Disordered regions lie at residues 1-145 and 159-243; these read MFRR…RYRI and LRKE…VDDG. The segment at 1-301 is interaction with ZBTB43; it reads MFRRARLSVK…TYSSFRKNYY (301 aa). The span at 81-92 shows a compositional bias: low complexity; the sequence is AAESSTLSSASS. The span at 99–118 shows a compositional bias: polar residues; sequence SSTSSLVQPSGSAPSQSRPL. 2 stretches are compositionally biased toward basic and acidic residues: residues 133 to 144 and 177 to 186; these read AKEKQPCSDRYR and RPPDRSKMTM. Residues 144–177 are a coiled coil; sequence RIYKARKLREMLKEELRKEKKQWKNKFSTNESQR. The span at 231–242 shows a compositional bias: acidic residues; that stretch reads NDNEDVEEEVDD. Residues 297–347 form the Myb-like domain; sequence RKNYYSKPWSNKETDMFFLAISMVGTDFSMIGQLFPHRARIEIKNKFKREE. The interval 357-472 is required for phosphorylation by CSNK2A1; the sequence is AFQEKRPFDF…QEKKRRRNQG (116 aa). Disordered stretches follow at residues 380–513, 576–720, 748–844, 866–893, 971–1200, 1231–1270, 1318–1388, 1409–1448, 1527–1561, 1592–1706, 1902–1926, 1977–2014, 2058–2083, 2179–2206, 2260–2290, and 2304–2449; these read EEKR…ECNK, SADM…VKAA, PPQT…PATW, LTAT…NAEM, LQEN…SSKI, LGRH…VKPA, DSDQ…LVPI, LPVR…PELQ, KAKP…EDHL, IHSE…RASK, IVSK…LPTR, IQRE…QCVG, LDSG…SDVP, LVVQ…DLTS, GIFP…SGSL, and LPQS…EEVT. A coiled-coil region spans residues 458–487; that stretch reads EQDQNQEKKRRRNQGEANKQEATNLLERVL. A compositionally biased stretch (basic and acidic residues) spans 649–660; that stretch reads AAEKNHMEKETM. Positions 809 to 824 are enriched in basic residues; that stretch reads RFQKPKPNTGRRRRRI. 6 stretches are compositionally biased toward basic and acidic residues: residues 873–884, 992–1002, 1009–1041, 1089–1098, 1112–1130, and 1150–1170; these read KDSESDVKDSGR, TGKDLAMKEST, TEER…RGEM, EGKELNLRET, EKTD…ERES, and DLGK…EEHS. Composition is skewed to polar residues over residues 1180-1200, 1251-1265, 1318-1330, and 1364-1382; these read LSSS…SSKI, DTNL…QQPL, DSDQ…QHNV, and PPNS…NQEN. Basic and acidic residues-rich tracts occupy residues 1429–1448, 1536–1561, and 1592–1603; these read QIVE…PELQ, RRKD…EDHL, and IHSEESGSDRND. 2 stretches are compositionally biased toward polar residues: residues 1621-1642 and 1650-1665; these read EQPT…SSCP and YPKT…SSAS. The segment covering 1688-1697 has biased composition (basic residues); sequence RGSKRIRGKT. 3 stretches are compositionally biased toward basic and acidic residues: residues 1902–1913, 1977–1996, and 2068–2078; these read IVSKEQSNRDAA, IQRE…DKSH, and AAKEALKETPK. Residues 2185–2199 are compositionally biased toward low complexity; the sequence is PSLSPSRSGSSEKPP. Polar residues-rich tracts occupy residues 2262-2273, 2319-2334, and 2414-2429; these read FPTSESTHATSK, PASN…SSSK, and TAGS…SSDQ.

In terms of assembly, component of TFIIIB complex. The TFIIIB complex has two activities, alpha and beta. The TFIIIB-alpha and TFIIIB-beta activities are required for transcription of genes with TFIIIC-bound internal promoters and PSE transcription factor-bound external promoters, respectively. The TFIIIB-alpha activity complex is composed of TBP, BDP1, and a complex containing both BRF2 and at least four stably associated proteins; YY1 facilitates the formation of TFIIIB-alpha activity complex. The TFIIIB-beta activity complex is composed of TBP, BDP1, and BRF1. Interacts with BRF1; this interaction diminishes during mitosis resulting in the release of BDP1 from chromosomal templates. Component of TFIIIC complex. The TFIIIC complex has two activities, C1 and C2. The TFIIIC2 activity complex is only required for transcription of the 'classical' pol III genes whereas the TFIIIC1 activity complex is required for transcription of all pol III genes. The TFIIIC1 activity complex is composed at least of BDP1. Interacts with ZBTB43. Phosphorylated by CSNK2A1 during mitosis, resulting in its release from chromatin and suppression of polymerase III transcription. Expressed in the cochlea, particularly in the spiral ligament, the capillaries of the stria vascularis and the basilar membrane.

Its subcellular location is the nucleus. General activator of RNA polymerase III transcription. Requires for transcription from all three types of polymerase III promoters. Requires for transcription of genes with internal promoter elements and with promoter elements upstream of the initiation site. This is Transcription factor TFIIIB component B'' homolog (Bdp1) from Mus musculus (Mouse).